Consider the following 500-residue polypeptide: Lysine--tRNA ligase (500 aa).

Residues Glu-402 and Glu-409 each contribute to the Mg(2+) site.

It belongs to the class-II aminoacyl-tRNA synthetase family. In terms of assembly, homodimer. It depends on Mg(2+) as a cofactor.

The protein localises to the cytoplasm. The enzyme catalyses tRNA(Lys) + L-lysine + ATP = L-lysyl-tRNA(Lys) + AMP + diphosphate. This chain is Lysine--tRNA ligase, found in Buchnera aphidicola subsp. Baizongia pistaciae (strain Bp).